The following is a 91-amino-acid chain: Ice-structuring protein (91 aa).

The first 21 residues, 1 to 21, serve as a signal peptide directing secretion; the sequence is MALSLFTVGQLIFLFWTMRIT. Residues 22–39 constitute a propeptide, removed by a dipeptidylpeptidase; sequence EANPDPAAKAVPAAAAPD.

This sequence belongs to the type-I AFP family.

It localises to the secreted. In terms of biological role, contributes to protect fish blood from freezing at subzero sea water temperatures. Lowers the blood freezing point. Binds to nascent ice crystals and prevents further growth. The polypeptide is Ice-structuring protein (Pseudopleuronectes americanus (Winter flounder)).